The chain runs to 155 residues: Large ribosomal subunit protein bL9c (155 aa).

It belongs to the bacterial ribosomal protein bL9 family.

The protein resides in the plastid. It is found in the chloroplast. Its function is as follows. Binds to the 23S rRNA. The sequence is that of Large ribosomal subunit protein bL9c from Porphyra purpurea (Red seaweed).